The sequence spans 151 residues: Transcriptional repressor NrdR (151 aa).

Residues 3-34 (CPYCGYEETRVLDSRVDSSGMTVRRRRECVKC) fold into a zinc finger. One can recognise an ATP-cone domain in the interval 49-139 (VFVVKKDGKR…VYKDFREIDQ (91 aa)).

The protein belongs to the NrdR family. Zn(2+) serves as cofactor.

Its function is as follows. Negatively regulates transcription of bacterial ribonucleotide reductase nrd genes and operons by binding to NrdR-boxes. The protein is Transcriptional repressor NrdR of Thermosipho melanesiensis (strain DSM 12029 / CIP 104789 / BI429).